A 433-amino-acid polypeptide reads, in one-letter code: Adenosylhomocysteinase A (433 aa).

Substrate contacts are provided by T57, D132, E157, K187, and D191. An NAD binding region spans residues 184–351; sequence SVTKSKFDNL…EGRLVNLGCA (168 aa).

The protein belongs to the adenosylhomocysteinase family. Homotetramer. Requires NAD(+) as cofactor.

The protein resides in the cytoplasm. It carries out the reaction S-adenosyl-L-homocysteine + H2O = L-homocysteine + adenosine. It functions in the pathway amino-acid biosynthesis; L-homocysteine biosynthesis; L-homocysteine from S-adenosyl-L-homocysteine: step 1/1. Catalyzes the hydrolysis of S-adenosyl-L-homocysteine to form adenosine and homocysteine. Binds copper ions. This chain is Adenosylhomocysteinase A (ahcy-a), found in Xenopus laevis (African clawed frog).